The chain runs to 113 residues: Ribulose bisphosphate carboxylase small subunit (113 aa).

Belongs to the RuBisCO small chain family. As to quaternary structure, heterohexadecamer of 8 large and 8 small subunits.

Its subcellular location is the carboxysome. Functionally, ruBisCO catalyzes two reactions: the carboxylation of D-ribulose 1,5-bisphosphate, the primary event in carbon dioxide fixation, as well as the oxidative fragmentation of the pentose substrate in the photorespiration process. Both reactions occur simultaneously and in competition at the same active site. Although the small subunit is not catalytic it is essential for maximal activity. This Synechococcus sp. (strain WH7803) protein is Ribulose bisphosphate carboxylase small subunit.